A 264-amino-acid chain; its full sequence is DNA repair protein RecO (264 aa).

This sequence belongs to the RecO family.

Its function is as follows. Involved in DNA repair and RecF pathway recombination. The sequence is that of DNA repair protein RecO from Leuconostoc citreum (strain KM20).